Here is a 953-residue protein sequence, read N- to C-terminus: Lysosomal alpha-glucosidase (953 aa).

Residues 1–27 (MNIRKPLCSNSVVGACTLISLTTAVIL) form the signal peptide. The propeptide occupies 28 to 69 (GHLMLRELMLLPQDLHESSSGLWKTYRPHHQEGYKPGPLHIQ). Residues 80-131 (TQCDVPPSSRFDCAPDKGISQEQCEARGCCYVPAGQVLKEPQIGQPWCFFPP) enclose the P-type domain. Intrachain disulfides connect cysteine 82–cysteine 109, cysteine 92–cysteine 108, and cysteine 103–cysteine 127. Residues asparagine 140, asparagine 233, and asparagine 390 are each glycosylated (N-linked (GlcNAc...) asparagine). Residue aspartate 404 participates in substrate binding. N-linked (GlcNAc...) asparagine glycosylation occurs at asparagine 470. The active-site Nucleophile is the aspartate 518. Glutamate 521 is an active-site residue. Cysteine 533 and cysteine 558 are joined by a disulfide. Arginine 600 and aspartate 616 together coordinate substrate. Cysteine 647 and cysteine 658 form a disulfide bridge. Histidine 674 is a binding site for substrate. N-linked (GlcNAc...) asparagine glycans are attached at residues asparagine 883, asparagine 926, and asparagine 933.

It belongs to the glycosyl hydrolase 31 family.

Its subcellular location is the lysosome. It is found in the lysosome membrane. The enzyme catalyses Hydrolysis of terminal, non-reducing (1-&gt;4)-linked alpha-D-glucose residues with release of alpha-D-glucose.. In terms of biological role, essential for the degradation of glycogen in lysosomes. Has highest activity on alpha-1,4-linked glycosidic linkages, but can also hydrolyze alpha-1,6-linked glucans. The protein is Lysosomal alpha-glucosidase (Gaa) of Mus musculus (Mouse).